A 237-amino-acid chain; its full sequence is MTPQAFYLVLEQAGFALTNHQKEQFDTYFKLLVDWNRKINLTAITEENEVYLKHFYDSVAPLLQGYIPNEPLRLLDIGAGAGFPSIPMKIMFPKLDVTIIDSLNKRIHFLQLLAKELGLEGVHFYHGRAEDFGQDKQFRGQFDLVTARAVARMQILSELTIPFLKIKGKLIALKAQAADQELEEAKKALQLLFAKVLDHQPYQLPNGDGRYITLVEKKKETPNKYPRKAGIPNKKPL.

S-adenosyl-L-methionine contacts are provided by residues Gly-78, Phe-83, 129-130 (AE), and Arg-148.

This sequence belongs to the methyltransferase superfamily. RNA methyltransferase RsmG family.

The protein resides in the cytoplasm. Its function is as follows. Specifically methylates the N7 position of a guanine in 16S rRNA. This Streptococcus equi subsp. equi (strain 4047) protein is Ribosomal RNA small subunit methyltransferase G.